Here is a 439-residue protein sequence, read N- to C-terminus: Trigger factor (439 aa).

A PPIase FKBP-type domain is found at 162–247 (GDTVTIDYVG…IHEVKAKQLP (86 aa)).

It belongs to the FKBP-type PPIase family. Tig subfamily.

It is found in the cytoplasm. The enzyme catalyses [protein]-peptidylproline (omega=180) = [protein]-peptidylproline (omega=0). Functionally, involved in protein export. Acts as a chaperone by maintaining the newly synthesized protein in an open conformation. Functions as a peptidyl-prolyl cis-trans isomerase. This chain is Trigger factor, found in Lactobacillus delbrueckii subsp. bulgaricus (strain ATCC 11842 / DSM 20081 / BCRC 10696 / JCM 1002 / NBRC 13953 / NCIMB 11778 / NCTC 12712 / WDCM 00102 / Lb 14).